We begin with the raw amino-acid sequence, 838 residues long: MIPRPPSDDRANQNGDGSKKTGAKKTGAKKAAAAKKTAGKKATPAAKATAAKGAVTKKTGKGKATAKKAVADKAAAKATVPQQAVPKQAVSKRAVSKKAVPRKAVVKAALDIPEAPVSPAVAPDDRDRLLSGTHHAPHSVLGAHPVPGGVAFRVLRPYALSVTVVTDDLRTELHDDGAGFFTGLLPLRAVPDYRLHVAYEGTVHETEDAYRFLPALGELDLHLINEGRHEELWTALGAEPMTHQGVPGTRFTVWAPNARGVRLAGTFNFWDATAFPLRSLGSSGVWELFVPGVGEGELYKFEITRPDGSKTLRADPVARRTEAPPRTSSIVHASHYAWADEAWMAARGERPVHESPFSVYEVHLPSWRPGLTYRQLAEQLPAYVADLGFTHVELLPVAEHPFGGSWGYQVTGFYAPTARLGTPDDFKYLVDALHRAGVGVLMDWVPAHFPRDDWALAEFDGRPLYEHEDPLRAAHPDWGTLEFDYGRREVRNFLVANAVYWCEEFHIDGLRVDAVASMLYLDYSREEGQWSPNEFGGRENLDAVAFLQEMNATVYRRVPGVVTIAEESTAWEGVTRATHDNGLGFGLKWNMGWMHDSLGYVQHEPVHRRFHHHEMTFSMVYAYSENYVLPISHDEVVHGKGSLVSKMPGDWWQQRATERAYLGFMWAHPGKQLLFMGQEFAQGAEWSETHGPDWWLLDPAYGAEPDHRGMRDLVRDLNTVYRHEPALWERDTDPSGFAWVTGDAVEDNVFAFLRHAADGTPLLAVSNFSPVVRHDYRLGVPDDIPAWHETLNTDGARYGGSDVTNPHPVKPEPQGRHGRPASIRLTLPPLSTLWLRPA.

Over residues 1–11 (MIPRPPSDDRA) the composition is skewed to basic and acidic residues. 2 disordered regions span residues 1–98 (MIPR…VSKK) and 116–142 (PVSPAVAPDDRDRLLSGTHHAPHSVLG). Over residues 29–57 (KKAAAAKKTAGKKATPAAKATAAKGAVTK) the composition is skewed to low complexity. The active-site Nucleophile is D513. Residue E566 is the Proton donor of the active site. Residues 793–822 (TDGARYGGSDVTNPHPVKPEPQGRHGRPAS) form a disordered region.

Belongs to the glycosyl hydrolase 13 family. GlgB subfamily. In terms of assembly, monomer.

The enzyme catalyses Transfers a segment of a (1-&gt;4)-alpha-D-glucan chain to a primary hydroxy group in a similar glucan chain.. The protein operates within glycan biosynthesis; glycogen biosynthesis. Catalyzes the formation of the alpha-1,6-glucosidic linkages in glycogen by scission of a 1,4-alpha-linked oligosaccharide from growing alpha-1,4-glucan chains and the subsequent attachment of the oligosaccharide to the alpha-1,6 position. The sequence is that of 1,4-alpha-glucan branching enzyme GlgB 1 from Streptomyces avermitilis (strain ATCC 31267 / DSM 46492 / JCM 5070 / NBRC 14893 / NCIMB 12804 / NRRL 8165 / MA-4680).